We begin with the raw amino-acid sequence, 149 residues long: MSKVVSKMKSFLGFDEFEDEDEVMEEEEVMEEEESFAPVLSSKKNGKVVNIHTANTAKLMITKPLVYDDATEICTALKNRKIVVINTTSLELRTAQRLIDFVGGACYALCGELQEVEKGVFIVSPSNVEVSNELKSELSNKGMFNWASK.

This sequence belongs to the SepF family. Homodimer. Interacts with FtsZ.

Its subcellular location is the cytoplasm. Its function is as follows. Cell division protein that is part of the divisome complex and is recruited early to the Z-ring. Probably stimulates Z-ring formation, perhaps through the cross-linking of FtsZ protofilaments. Its function overlaps with FtsA. The polypeptide is Cell division protein SepF (Clostridium perfringens (strain ATCC 13124 / DSM 756 / JCM 1290 / NCIMB 6125 / NCTC 8237 / Type A)).